The primary structure comprises 247 residues: 3-oxoacyl-[acyl-carrier-protein] reductase MabA (247 aa).

NADP(+) is bound by residues 25-27 (RGI), arginine 47, 61-62 (DV), glycine 90, tyrosine 153, lysine 157, isoleucine 186, and arginine 197. Tyrosine 153 functions as the Proton acceptor in the catalytic mechanism.

This sequence belongs to the short-chain dehydrogenases/reductases (SDR) family. In terms of assembly, homotetramer.

Its subcellular location is the secreted. It localises to the cell wall. It carries out the reaction a (3R)-hydroxyacyl-[ACP] + NADP(+) = a 3-oxoacyl-[ACP] + NADPH + H(+). It participates in lipid metabolism; mycolic acid biosynthesis. Functionally, part of the mycobacterial fatty acid elongation system FAS-II, which is involved in mycolic acid biosynthesis. Catalyzes the NADPH-dependent reduction of beta-ketoacyl derivatives, the second step of the FAS-II elongation cycle. This Mycobacterium bovis (strain ATCC BAA-935 / AF2122/97) protein is 3-oxoacyl-[acyl-carrier-protein] reductase MabA.